The following is a 62-amino-acid chain: Sperm histone P2a (62 aa).

Belongs to the protamine P2 family. Post-translationally, proteolytic processing into mature chains is required for histone eviction during spermatogenesis. Transition proteins (TNP1 and TNP2) are required for processing. In terms of tissue distribution, testis.

It localises to the nucleus. The protein localises to the chromosome. Its function is as follows. Protamines substitute for histones in the chromatin of sperm during the haploid phase of spermatogenesis. They compact sperm DNA into a highly condensed, stable and inactive complex. The sequence is that of Sperm histone P2a from Equus caballus (Horse).